Consider the following 329-residue polypeptide: Signal recognition particle receptor FtsY (329 aa).

GTP-binding positions include 127 to 134 (GVNGVGKT), 209 to 213 (DTAGR), and 273 to 276 (TKLD).

Belongs to the GTP-binding SRP family. FtsY subfamily. As to quaternary structure, part of the signal recognition particle protein translocation system, which is composed of SRP and FtsY.

Its subcellular location is the cell membrane. It localises to the cytoplasm. The catalysed reaction is GTP + H2O = GDP + phosphate + H(+). Involved in targeting and insertion of nascent membrane proteins into the cytoplasmic membrane. Acts as a receptor for the complex formed by the signal recognition particle (SRP) and the ribosome-nascent chain (RNC). The chain is Signal recognition particle receptor FtsY from Bacillus subtilis (strain 168).